A 452-amino-acid chain; its full sequence is Isocitrate dehydrogenase [NADP], mitochondrial (452 aa).

The transit peptide at 1–39 directs the protein to the mitochondrion; it reads MAGYLRVVRSLCRASGSGSAWAPAALTAPNLQEQPRRHY. 4 positions are modified to N6-acetyllysine: lysine 45, lysine 48, lysine 67, and lysine 69. An N6-acetyllysine; alternate mark is found at lysine 80 and lysine 106. N6-succinyllysine; alternate is present on residues lysine 80 and lysine 106. NADP(+) is bound by residues 115 to 117 and arginine 122; that span reads TIT. Threonine 117 is a D-threo-isocitrate binding site. Residues 134–140 and arginine 149 contribute to the D-threo-isocitrate site; that span reads SPNGTIR. Lysine 155 carries the N6-acetyllysine modification. Position 166 is an N6-acetyllysine; alternate (lysine 166). Lysine 166 carries the post-translational modification N6-succinyllysine; alternate. Arginine 172 is a D-threo-isocitrate binding site. 2 positions are modified to N6-acetyllysine; alternate: lysine 180 and lysine 193. 2 positions are modified to N6-succinyllysine; alternate: lysine 180 and lysine 193. Position 199 is an N6-acetyllysine (lysine 199). At lysine 256 the chain carries N6-acetyllysine; alternate. Lysine 256 is modified (N6-succinyllysine; alternate). An N6-acetyllysine mark is found at lysine 263, lysine 272, lysine 275, and lysine 280. Lysine 282 carries the post-translational modification N6-acetyllysine; alternate. Lysine 282 carries the N6-succinyllysine; alternate modification. Aspartate 291 is a binding site for Mn(2+). Lysine 299 is an NADP(+) binding site. Aspartate 314 provides a ligand contact to Mn(2+). Residues 349-354 and asparagine 367 contribute to the NADP(+) site; that span reads GTVTRH. N6-acetyllysine; alternate is present on lysine 384. Lysine 384 bears the N6-succinyllysine; alternate mark. N6-acetyllysine is present on residues lysine 400, lysine 413, and lysine 442.

The protein belongs to the isocitrate and isopropylmalate dehydrogenases family. In terms of assembly, homodimer. Requires Mg(2+) as cofactor. It depends on Mn(2+) as a cofactor. Acetylation at Lys-413 dramatically reduces catalytic activity. Deacetylated by SIRT3.

It is found in the mitochondrion. It carries out the reaction D-threo-isocitrate + NADP(+) = 2-oxoglutarate + CO2 + NADPH. Its function is as follows. Plays a role in intermediary metabolism and energy production. It may tightly associate or interact with the pyruvate dehydrogenase complex. This Bos taurus (Bovine) protein is Isocitrate dehydrogenase [NADP], mitochondrial (IDH2).